Reading from the N-terminus, the 266-residue chain is 2-C-methyl-D-erythritol 4-phosphate cytidylyltransferase (266 aa).

A compositionally biased stretch (basic and acidic residues) spans 234–251 (ADDARSAEARSAEARSEE). The segment at 234 to 266 (ADDARSAEARSAEARSEEPQFAGARSTDARSGG) is disordered.

It belongs to the IspD/TarI cytidylyltransferase family. IspD subfamily.

The enzyme catalyses 2-C-methyl-D-erythritol 4-phosphate + CTP + H(+) = 4-CDP-2-C-methyl-D-erythritol + diphosphate. The protein operates within isoprenoid biosynthesis; isopentenyl diphosphate biosynthesis via DXP pathway; isopentenyl diphosphate from 1-deoxy-D-xylulose 5-phosphate: step 2/6. Catalyzes the formation of 4-diphosphocytidyl-2-C-methyl-D-erythritol from CTP and 2-C-methyl-D-erythritol 4-phosphate (MEP). In Frankia casuarinae (strain DSM 45818 / CECT 9043 / HFP020203 / CcI3), this protein is 2-C-methyl-D-erythritol 4-phosphate cytidylyltransferase.